The sequence spans 118 residues: V-type proton ATPase subunit G 1 (118 aa).

The residue at position 2 (A2) is an N-acetylalanine. The tract at residues 19-42 (AEKVSEARKRKNRRLKQAKEEAQA) is disordered.

This sequence belongs to the V-ATPase G subunit family. V-ATPase is a heteromultimeric enzyme made up of two complexes: the ATP-hydrolytic V1 complex and the proton translocation V0 complex. The V1 complex consists of three catalytic AB heterodimers that form a heterohexamer, three peripheral stalks each consisting of EG heterodimers, one central rotor including subunits D and F, and the regulatory subunits C and H. The proton translocation complex V0 consists of the proton transport subunit a, a ring of proteolipid subunits c9c'', rotary subunit d, subunits e and f, and the accessory subunits ATP6AP1/Ac45 and ATP6AP2/PRR. In terms of tissue distribution, brain, heart, kidney and spleen.

It is found in the apical cell membrane. In terms of biological role, subunit of the V1 complex of vacuolar(H+)-ATPase (V-ATPase), a multisubunit enzyme composed of a peripheral complex (V1) that hydrolyzes ATP and a membrane integral complex (V0) that translocates protons. V-ATPase is responsible for acidifying and maintaining the pH of intracellular compartments and in some cell types, is targeted to the plasma membrane, where it is responsible for acidifying the extracellular environment. In aerobic conditions, involved in intracellular iron homeostasis, thus triggering the activity of Fe(2+) prolyl hydroxylase (PHD) enzymes, and leading to HIF1A hydroxylation and subsequent proteasomal degradation. This chain is V-type proton ATPase subunit G 1 (ATP6V1G1), found in Bos taurus (Bovine).